A 295-amino-acid polypeptide reads, in one-letter code: Deleted in azoospermia-like (295 aa).

Residues 1 to 10 (MSTANPETPN) are compositionally biased toward polar residues. The tract at residues 1 to 25 (MSTANPETPNSTISREASTQSSSAA) is disordered. Residues 11–25 (STISREASTQSSSAA) show a composition bias toward low complexity. Positions 40 to 115 (NTVFVGGIDV…KKLKLGPAIR (76 aa)) constitute an RRM domain. Residues 80-132 (KGYGFVSFFNDVDVQKIVESQINFHGKKLKLGPAIRKQNLCAYHVQPRPLVFN) are homodimerization. The DAZ domain maps to 167–190 (AYPTYPNSPVQVITGYQLPVYNYQ). Position 276 is a phosphotyrosine (Y276).

It belongs to the RRM DAZ family. In terms of assembly, homodimer and heterodimer. Multiple DAZL RRMs can bind to a single RNA containing multiple GUU triplets. Forms a heterodimer with DAZ. Interacts with BOLL, DAZAP1 and DAZAP2. Interacts with PUM2. Testis specific.

Its subcellular location is the cytoplasm. It is found in the nucleus. Functionally, RNA-binding protein, which is essential for gametogenesis in both males and females. Plays a central role during spermatogenesis. Acts by binding to the 3'-UTR of mRNA, specifically recognizing GUU triplets, and thereby regulating the translation of key transcripts. This chain is Deleted in azoospermia-like (DAZL), found in Homo sapiens (Human).